A 1714-amino-acid chain; its full sequence is uncharacterized protein (1714 aa).

Disordered stretches follow at residues 47–70 (SVAGSEKNASDDDSDASSVMSDDL) and 584–616 (KKTGKGGWSGQKQQKPGAGGKKGATKESGKSKK). ATP contacts are provided by residues 607-614 (ATKESGKS) and 806-813 (APTSAGKT). The segment covering 607 to 616 (ATKESGKSKK) has biased composition (basic and acidic residues). The Helicase ATP-binding domain maps to 793-963 (LDSVDRGNSA…WLNSSEQAKS (171 aa)). The short motif at 913-916 (DEVH) is the DEVH box element. The tract at residues 1197 to 1223 (KRKRDDAEKKKKGDKDEDAGPEKDDDE) is disordered. The segment covering 1199-1218 (KRDDAEKKKKGDKDEDAGPE) has biased composition (basic and acidic residues). The Helicase C-terminal domain occupies 1237–1391 (ALERFKLRGR…NPPFTVLFLL (155 aa)).

The protein belongs to the helicase family. SKI2 subfamily.

Its subcellular location is the nucleus. This is an uncharacterized protein from Caenorhabditis elegans.